A 162-amino-acid polypeptide reads, in one-letter code: Crossover junction endodeoxyribonuclease RuvC (162 aa).

Residues aspartate 8, glutamate 69, and histidine 141 contribute to the active site. 3 residues coordinate Mg(2+): aspartate 8, glutamate 69, and histidine 141.

The protein belongs to the RuvC family. In terms of assembly, homodimer which binds Holliday junction (HJ) DNA. The HJ becomes 2-fold symmetrical on binding to RuvC with unstacked arms; it has a different conformation from HJ DNA in complex with RuvA. In the full resolvosome a probable DNA-RuvA(4)-RuvB(12)-RuvC(2) complex forms which resolves the HJ. Requires Mg(2+) as cofactor.

The protein resides in the cytoplasm. It carries out the reaction Endonucleolytic cleavage at a junction such as a reciprocal single-stranded crossover between two homologous DNA duplexes (Holliday junction).. Its function is as follows. The RuvA-RuvB-RuvC complex processes Holliday junction (HJ) DNA during genetic recombination and DNA repair. Endonuclease that resolves HJ intermediates. Cleaves cruciform DNA by making single-stranded nicks across the HJ at symmetrical positions within the homologous arms, yielding a 5'-phosphate and a 3'-hydroxyl group; requires a central core of homology in the junction. The consensus cleavage sequence is 5'-(A/T)TT(C/G)-3'. Cleavage occurs on the 3'-side of the TT dinucleotide at the point of strand exchange. HJ branch migration catalyzed by RuvA-RuvB allows RuvC to scan DNA until it finds its consensus sequence, where it cleaves and resolves the cruciform DNA. This chain is Crossover junction endodeoxyribonuclease RuvC, found in Wolbachia sp. subsp. Brugia malayi (strain TRS).